A 343-amino-acid polypeptide reads, in one-letter code: Phosphoribosylformylglycinamidine cyclo-ligase (343 aa).

This sequence belongs to the AIR synthase family.

The protein localises to the cytoplasm. The catalysed reaction is 2-formamido-N(1)-(5-O-phospho-beta-D-ribosyl)acetamidine + ATP = 5-amino-1-(5-phospho-beta-D-ribosyl)imidazole + ADP + phosphate + H(+). The protein operates within purine metabolism; IMP biosynthesis via de novo pathway; 5-amino-1-(5-phospho-D-ribosyl)imidazole from N(2)-formyl-N(1)-(5-phospho-D-ribosyl)glycinamide: step 2/2. The polypeptide is Phosphoribosylformylglycinamidine cyclo-ligase (Enterococcus faecalis (strain ATCC 700802 / V583)).